A 415-amino-acid polypeptide reads, in one-letter code: Beta-1,4-glucuronyltransferase 1 (415 aa).

Residues 1–8 are Cytoplasmic-facing; that stretch reads MQMSYAIR. A helical; Signal-anchor for type II membrane protein transmembrane segment spans residues 9-36; sequence CAFYQLLLAALMLVAMLQLLYLSLLSGL. Topologically, residues 37–415 are lumenal; sequence HGQEEQDQYF…AKYPDSPRHC (379 aa). N-linked (GlcNAc...) asparagine glycosylation is present at Asn-204. Residues Asp-227 and Asp-229 each contribute to the Mn(2+) site. Asn-300 carries N-linked (GlcNAc...) asparagine glycosylation.

Belongs to the glycosyltransferase 49 family. Interacts with LARGE1 and LARGE2. The cofactor is Mn(2+).

It localises to the golgi apparatus membrane. It catalyses the reaction 3-O-[beta-D-Xyl-(1-&gt;4)-Rib-ol-P-Rib-ol-P-3-beta-D-GalNAc-(1-&gt;3)-beta-D-GlcNAc-(1-&gt;4)-(O-6-P-alpha-D-Man)]-Thr-[protein] + UDP-alpha-D-glucuronate = 3-O-[beta-D-GlcA-(1-&gt;3)-beta-D-Xyl-(1-&gt;4)-Rib-ol-P-Rib-ol-P-3-beta-D-GalNAc-(1-&gt;3)-beta-D-GlcNAc-(1-&gt;4)-(O-6-P-alpha-D-Man)]-Thr-[protein] + UDP + H(+). The protein operates within protein modification; protein glycosylation. Its function is as follows. Beta-1,4-glucuronyltransferase involved in O-mannosylation of alpha-dystroglycan (DAG1). Transfers a glucuronic acid (GlcA) residue onto a xylose (Xyl) acceptor to produce the glucuronyl-beta-1,4-xylose-beta disaccharide primer, which is further elongated by LARGE1, during synthesis of phosphorylated O-mannosyl glycan. Phosphorylated O-mannosyl glycan is a carbohydrate structure present in alpha-dystroglycan (DAG1), which is required for binding laminin G-like domain-containing extracellular proteins with high affinity. Required for axon guidance; via its function in O-mannosylation of alpha-dystroglycan (DAG1). The polypeptide is Beta-1,4-glucuronyltransferase 1 (Bos taurus (Bovine)).